The chain runs to 280 residues: Acyl-[acyl-carrier-protein]--UDP-N-acetylglucosamine O-acyltransferase (280 aa).

Belongs to the transferase hexapeptide repeat family. LpxA subfamily. In terms of assembly, homotrimer.

The protein resides in the cytoplasm. It catalyses the reaction a (3R)-hydroxyacyl-[ACP] + UDP-N-acetyl-alpha-D-glucosamine = a UDP-3-O-[(3R)-3-hydroxyacyl]-N-acetyl-alpha-D-glucosamine + holo-[ACP]. The protein operates within glycolipid biosynthesis; lipid IV(A) biosynthesis; lipid IV(A) from (3R)-3-hydroxytetradecanoyl-[acyl-carrier-protein] and UDP-N-acetyl-alpha-D-glucosamine: step 1/6. In terms of biological role, involved in the biosynthesis of lipid A, a phosphorylated glycolipid that anchors the lipopolysaccharide to the outer membrane of the cell. In Chlamydia trachomatis serovar A (strain ATCC VR-571B / DSM 19440 / HAR-13), this protein is Acyl-[acyl-carrier-protein]--UDP-N-acetylglucosamine O-acyltransferase.